Reading from the N-terminus, the 291-residue chain is MAKGRVAERSQMGADHTTPVGDGAAGTRGPAAPGSRDYQKEKSWAEAGSARMSLLILVSIFLSAAFVMFLVYKNFPQLSEEERVNMKVPRDMDDAKALGKVLSKYKDTFYVQVLVAYFATYIFLQTFAIPGSIFLSILSGFLYPFPLALFLVCLCSGLGASFCYMLSYLVGRPVVYKYLTEKAVKWSQQVERHREHLINYIIFLRITPFLPNWFINITSPVINVPLKVFFIGTFLGVAPPSFVAIKAGTTLHQPTTAGEAVSWNSIFILMILAVLSILPAIFQKKLKQKFE.

The disordered stretch occupies residues 1–38; the sequence is MAKGRVAERSQMGADHTTPVGDGAAGTRGPAAPGSRDY. At T18 the chain carries Phosphothreonine. Over residues 21–34 the composition is skewed to low complexity; that stretch reads GDGAAGTRGPAAPG. At S35 the chain carries Phosphoserine. Transmembrane regions (helical) follow at residues 52 to 72, 109 to 129, 147 to 169, 197 to 217, 225 to 245, and 262 to 282; these read MSLL…FLVY, FYVQ…TFAI, LALF…LSYL, LINY…FINI, PLKV…FVAI, and SWNS…PAIF. A VTT domain; required for its function in autophagy region spans residues 140–251; sequence GFLYPFPLAL…FVAIKAGTTL (112 aa).

The protein belongs to the TMEM41 family. As to quaternary structure, interacts with VMP1. Interacts with COPA, COPB1, VDAC1 and ERLIN2. Interacts with ATG2A. Interacts with SURF4.

It is found in the endoplasmic reticulum membrane. The protein resides in the endomembrane system. It carries out the reaction a 1,2-diacyl-sn-glycero-3-phospho-L-serine(in) = a 1,2-diacyl-sn-glycero-3-phospho-L-serine(out). The catalysed reaction is cholesterol(in) = cholesterol(out). The enzyme catalyses a 1,2-diacyl-sn-glycero-3-phosphocholine(in) = a 1,2-diacyl-sn-glycero-3-phosphocholine(out). It catalyses the reaction a 1,2-diacyl-sn-glycero-3-phosphoethanolamine(in) = a 1,2-diacyl-sn-glycero-3-phosphoethanolamine(out). Its function is as follows. Phospholipid scramblase involved in lipid homeostasis and membrane dynamics processes. Has phospholipid scramblase activity toward cholesterol and phosphatidylserine, as well as phosphatidylethanolamine and phosphatidylcholine. Required for autophagosome formation: participates in early stages of autophagosome biogenesis at the endoplasmic reticulum (ER) membrane by reequilibrating the leaflets of the ER as lipids are extracted by ATG2 (ATG2A or ATG2B) to mediate autophagosome assembly. In addition to autophagy, involved in other processes in which phospholipid scramblase activity is required. Required for normal motor neuron development. This chain is Transmembrane protein 41B, found in Pongo abelii (Sumatran orangutan).